The primary structure comprises 86 residues: Putative sodium channel toxin Ts17 (86 aa).

A signal peptide spans 1 to 19 (MNYFIFLVVACLLTAGTEG). Residues 21 to 82 (KDGYPVEGDN…EPTKTSGRCK (62 aa)) enclose the LCN-type CS-alpha/beta domain. Intrachain disulfides connect C31–C81, C35–C57, C43–C64, and C47–C66. Residue P83 is modified to Proline amide.

Belongs to the long (4 C-C) scorpion toxin superfamily. Sodium channel inhibitor family. Alpha subfamily. Expressed by the venom gland.

The protein localises to the secreted. Its function is as follows. Alpha toxins bind voltage-independently at site-3 of sodium channels (Nav) and inhibit the inactivation of the activated channels, thereby blocking neuronal transmission. The chain is Putative sodium channel toxin Ts17 from Tityus serrulatus (Brazilian scorpion).